Consider the following 71-residue polypeptide: Protein SlyX homolog (71 aa).

It belongs to the SlyX family.

The sequence is that of Protein SlyX homolog from Rhodopseudomonas palustris (strain BisB5).